Consider the following 82-residue polypeptide: Cytochrome b559 subunit alpha (82 aa).

Residues 22-36 (VIHFVTLPSIFLAGF) form a helical membrane-spanning segment. His24 provides a ligand contact to heme.

It belongs to the PsbE/PsbF family. Heterodimer of an alpha subunit and a beta subunit. PSII is composed of 1 copy each of membrane proteins PsbA, PsbB, PsbC, PsbD, PsbE, PsbF, PsbH, PsbI, PsbJ, PsbK, PsbL, PsbM, PsbT, PsbX, PsbY, PsbZ, Psb30/Ycf12, peripheral proteins PsbO, CyanoQ (PsbQ), PsbU, PsbV and a large number of cofactors. It forms dimeric complexes. Heme b is required as a cofactor.

It is found in the cellular thylakoid membrane. Functionally, this b-type cytochrome is tightly associated with the reaction center of photosystem II (PSII). PSII is a light-driven water:plastoquinone oxidoreductase that uses light energy to abstract electrons from H(2)O, generating O(2) and a proton gradient subsequently used for ATP formation. It consists of a core antenna complex that captures photons, and an electron transfer chain that converts photonic excitation into a charge separation. In Parasynechococcus marenigrum (strain WH8102), this protein is Cytochrome b559 subunit alpha.